The primary structure comprises 340 residues: tRNA-dihydrouridine(20/20a) synthase (340 aa).

Residues 22-24 (PMM) and Gln75 contribute to the FMN site. Residue Cys105 is the Proton donor of the active site. FMN is bound by residues Lys144, His177, 217-219 (NGG), and 239-240 (GR).

This sequence belongs to the Dus family. DusA subfamily. It depends on FMN as a cofactor.

The catalysed reaction is 5,6-dihydrouridine(20) in tRNA + NADP(+) = uridine(20) in tRNA + NADPH + H(+). The enzyme catalyses 5,6-dihydrouridine(20) in tRNA + NAD(+) = uridine(20) in tRNA + NADH + H(+). It catalyses the reaction 5,6-dihydrouridine(20a) in tRNA + NADP(+) = uridine(20a) in tRNA + NADPH + H(+). It carries out the reaction 5,6-dihydrouridine(20a) in tRNA + NAD(+) = uridine(20a) in tRNA + NADH + H(+). Functionally, catalyzes the synthesis of 5,6-dihydrouridine (D), a modified base found in the D-loop of most tRNAs, via the reduction of the C5-C6 double bond in target uridines. Specifically modifies U20 and U20a in tRNAs. The chain is tRNA-dihydrouridine(20/20a) synthase from Xylella fastidiosa (strain 9a5c).